The sequence spans 386 residues: Alanine racemase (386 aa).

The active-site Proton acceptor; specific for D-alanine is the Lys-48. At Lys-48 the chain carries N6-(pyridoxal phosphate)lysine. A substrate-binding site is contributed by Arg-147. The Proton acceptor; specific for L-alanine role is filled by Tyr-279. Residue Met-327 coordinates substrate.

Belongs to the alanine racemase family. It depends on pyridoxal 5'-phosphate as a cofactor.

It catalyses the reaction L-alanine = D-alanine. The protein operates within amino-acid biosynthesis; D-alanine biosynthesis; D-alanine from L-alanine: step 1/1. Catalyzes the interconversion of L-alanine and D-alanine. May also act on other amino acids. This Prochlorococcus marinus (strain SARG / CCMP1375 / SS120) protein is Alanine racemase (alr).